We begin with the raw amino-acid sequence, 298 residues long: Oxygen-dependent coproporphyrinogen-III oxidase (298 aa).

Residue serine 92 coordinates substrate. Positions 96 and 106 each coordinate a divalent metal cation. Histidine 106 functions as the Proton donor in the catalytic mechanism. A substrate-binding site is contributed by 108-110; that stretch reads NVR. 2 residues coordinate a divalent metal cation: histidine 145 and histidine 175. The tract at residues 239–274 is important for dimerization; that stretch reads YVEFNLVYDRGTLFGLQSGGRSESILMSLPPRVRWE. 257–259 lines the substrate pocket; sequence GGR.

Belongs to the aerobic coproporphyrinogen-III oxidase family. Homodimer. A divalent metal cation is required as a cofactor.

Its subcellular location is the cytoplasm. It carries out the reaction coproporphyrinogen III + O2 + 2 H(+) = protoporphyrinogen IX + 2 CO2 + 2 H2O. Its pathway is porphyrin-containing compound metabolism; protoporphyrin-IX biosynthesis; protoporphyrinogen-IX from coproporphyrinogen-III (O2 route): step 1/1. Functionally, involved in the heme biosynthesis. Catalyzes the aerobic oxidative decarboxylation of propionate groups of rings A and B of coproporphyrinogen-III to yield the vinyl groups in protoporphyrinogen-IX. The protein is Oxygen-dependent coproporphyrinogen-III oxidase of Stenotrophomonas maltophilia (strain K279a).